The chain runs to 380 residues: Probable pectin lyase A (380 aa).

A signal peptide spans 1–20 (MRYTSLFTAVTAALASTAAA). Cystine bridges form between C83-C102 and C92-C226. N-linked (GlcNAc...) asparagine glycosylation occurs at N129. Residue R256 is part of the active site. C323 and C331 are joined by a disulfide.

The protein belongs to the polysaccharide lyase 1 family.

It localises to the secreted. The enzyme catalyses Eliminative cleavage of (1-&gt;4)-alpha-D-galacturonan methyl ester to give oligosaccharides with 4-deoxy-6-O-methyl-alpha-D-galact-4-enuronosyl groups at their non-reducing ends.. Functionally, pectinolytic enzymes consist of four classes of enzymes: pectin lyase, polygalacturonase, pectin methylesterase and rhamnogalacturonase. Among pectinolytic enzymes, pectin lyase is the most important in depolymerization of pectin, since it cleaves internal glycosidic bonds of highly methylated pectins. The sequence is that of Probable pectin lyase A (pelA) from Aspergillus fumigatus (strain ATCC MYA-4609 / CBS 101355 / FGSC A1100 / Af293) (Neosartorya fumigata).